Reading from the N-terminus, the 340-residue chain is Pesticidal crystal protein Cry15Aa (340 aa).

The interval 318–340 is disordered; the sequence is RDYDKEHICHDQAEKYERDYDKE.

In terms of biological role, promotes colloidosmotic lysis by binding to the midgut epithelial cells of lepidopteran larvae. In Bacillus thuringiensis subsp. thompsoni, this protein is Pesticidal crystal protein Cry15Aa (cry15Aa).